Reading from the N-terminus, the 130-residue chain is Galectin-2 (130 aa).

The 127-residue stretch at 4 to 130 folds into the Galectin domain; sequence KFEVKDLNMK…GLQISSFKLE (127 aa). 65-71 provides a ligand contact to a beta-D-galactoside; that stretch reads WGQEQRE.

Homodimer.

Its function is as follows. This protein binds beta-galactoside. Its physiological function is not yet known. This Mus musculus (Mouse) protein is Galectin-2 (Lgals2).